Reading from the N-terminus, the 342-residue chain is Ribosomal RNA small subunit methyltransferase C (342 aa).

Belongs to the methyltransferase superfamily. RsmC family. In terms of assembly, monomer.

The protein resides in the cytoplasm. The enzyme catalyses guanosine(1207) in 16S rRNA + S-adenosyl-L-methionine = N(2)-methylguanosine(1207) in 16S rRNA + S-adenosyl-L-homocysteine + H(+). Functionally, specifically methylates the guanine in position 1207 of 16S rRNA in the 30S particle. The polypeptide is Ribosomal RNA small subunit methyltransferase C (Salmonella paratyphi A (strain ATCC 9150 / SARB42)).